A 168-amino-acid chain; its full sequence is uncharacterized protein (168 aa).

Positions 18 to 73 are disordered; that stretch reads RTTVKTKSHNPKTLYPNNKPRWESKLHAGPKGFQSSRTSEKPGRPDPDPEDDPPIP. Basic and acidic residues predominate over residues 55 to 64; that stretch reads TSEKPGRPDP. Helical transmembrane passes span 84–104 and 113–133; these read IVVSVGTPLGLGVAILKVLEV and VPLWVPYLTTLVTFGSSALGI.

It localises to the membrane. This is an uncharacterized protein from Arabidopsis thaliana (Mouse-ear cress).